The primary structure comprises 219 residues: Guanylate kinase (219 aa).

The 180-residue stretch at 15–194 (GLMFVLSSPS…AFESVKAILR (180 aa)) folds into the Guanylate kinase-like domain. 22 to 29 (SPSGAGKT) contributes to the ATP binding site.

Belongs to the guanylate kinase family.

Its subcellular location is the cytoplasm. The catalysed reaction is GMP + ATP = GDP + ADP. Its function is as follows. Essential for recycling GMP and indirectly, cGMP. This Rhodopseudomonas palustris (strain BisB5) protein is Guanylate kinase.